The chain runs to 479 residues: Calcium-dependent mitochondrial ATP-magnesium/phosphate carrier protein 3 (479 aa).

Topologically, residues 1-208 are mitochondrial intermembrane; the sequence is MESSKPKNRN…ISKHVKRSRL (208 aa). 4 EF-hand domains span residues 33–68, 69–104, 105–135, and 136–171; these read EREI…LQIP, PEYK…KELE, LYRI…AGIE, and IDDE…YPHE. Ca(2+) contacts are provided by Asp-82, Asn-84, Asp-86, Arg-88, and Glu-93. 5 residues coordinate Ca(2+): Asp-149, Asp-151, Asn-153, Thr-155, and Glu-160. Solcar repeat units lie at residues 203–286, 294–381, and 392–475; these read VKRS…LKPM, IGTS…LKDL, and PGPL…MKKN. The chain crosses the membrane as a helical span at residues 209–226; sequence LLAGGLAGAVSRTATAPL. At 227–260 the chain is on the mitochondrial matrix side; that stretch reads DRLKVVLQVQRAHAGVLPTIKKIWREDKLMGFFR. Residues 261-280 form a helical membrane-spanning segment; that stretch reads GNGLNVMKVAPESAIKFCAY. The Mitochondrial intermembrane portion of the chain corresponds to 281-303; sequence EMLKPMIGGEDGDIGTSGRLMAG. Residues 304 to 317 form a helical membrane-spanning segment; that stretch reads GMAGALAQTAIYPM. Topologically, residues 318–355 are mitochondrial matrix; sequence DLVKTRLQTCVSEGGKAPKLWKLTKDIWVREGPRAFYK. The chain crosses the membrane as a helical span at residues 356-375; that stretch reads GLFPSLLGIVPYAGIDLAAY. Over 376–397 the chain is Mitochondrial intermembrane; that stretch reads ETLKDLSRTYILQDTEPGPLIQ. A helical membrane pass occupies residues 398-415; the sequence is LSCGMTSGALGASCVYPL. The Mitochondrial matrix portion of the chain corresponds to 416-449; it reads QVVRTRMQADSSKTTMKQEFMNTMKGEGLRGFYR. A helical membrane pass occupies residues 450-469; that stretch reads GLLPNLLKVVPAASITYIVY. At 470–479 the chain is on the mitochondrial intermembrane side; that stretch reads EAMKKNMALD.

Belongs to the mitochondrial carrier (TC 2.A.29) family. In terms of tissue distribution, expressed in flowers, leaves, stems, roots and seedlings, mostly in seedlings.

Its subcellular location is the mitochondrion inner membrane. With respect to regulation, counter-exchange transport activity is saturable and inhibited by pyridoxal-5'-phosphate, EDTA and EGTA. Activated by calcium Ca(2+) and manganese Mn(2+) ions, and slightly by iron Fe(2+) and zinc Zn(2+) ions. Repressed by copper ions Cu(2+) and slightly by magnesium Mg(2+) ions. Magnesium Mg(2+) ions promotes slightly ATP uptake, ATP-Mg(2+) being exchanged with ATP(4-). Functionally, calcium-dependent mitochondrial carrier protein that catalyzes the import of ATP co-transported with metal divalent cations across the mitochondrial inner membrane in exchange for phosphate (Pi). Can transport phosphate, AMP, ADP, ATP, adenosine 5'-phosphosulfate, sulfate and thiosulfate, and, to a lesser extent, other nucleotides. Binds calcium ions Ca(2+). Also mediates calcium uptake. This chain is Calcium-dependent mitochondrial ATP-magnesium/phosphate carrier protein 3, found in Arabidopsis thaliana (Mouse-ear cress).